A 296-amino-acid chain; its full sequence is Probable porphobilinogen deaminase (296 aa).

At cysteine 241 the chain carries S-(dipyrrolylmethanemethyl)cysteine.

Belongs to the HMBS family. The cofactor is dipyrromethane.

The enzyme catalyses 4 porphobilinogen + H2O = hydroxymethylbilane + 4 NH4(+). It participates in porphyrin-containing compound metabolism; protoporphyrin-IX biosynthesis; coproporphyrinogen-III from 5-aminolevulinate: step 2/4. Functionally, tetrapolymerization of the monopyrrole PBG into the hydroxymethylbilane pre-uroporphyrinogen in several discrete steps. This Pyrobaculum calidifontis (strain DSM 21063 / JCM 11548 / VA1) protein is Probable porphobilinogen deaminase.